The primary structure comprises 248 residues: Trypsin I-P38 (248 aa).

Positions 1–15 (MKFLVLVAFLGVAVA) are cleaved as a signal peptide. The propeptide at 16-25 (FPISDEDDDK) is activation peptide. A Peptidase S1 domain is found at 26–246 (IVGGYSCARS…YVSWIKTTMS (221 aa)). 6 disulfide bridges follow: cysteine 32–cysteine 162, cysteine 50–cysteine 66, cysteine 134–cysteine 235, cysteine 141–cysteine 208, cysteine 173–cysteine 187, and cysteine 198–cysteine 222. The Charge relay system role is filled by histidine 65. Residues glutamate 77, asparagine 79, and glutamate 87 each contribute to the Ca(2+) site. Aspartate 109 acts as the Charge relay system in catalysis. The active-site Charge relay system is serine 202.

The protein belongs to the peptidase S1 family. Ca(2+) serves as cofactor. In terms of tissue distribution, high levels are seen in the pancreas while lower levels are found in the liver, spleen and thymus.

It localises to the secreted. Its subcellular location is the extracellular space. It catalyses the reaction Preferential cleavage: Arg-|-Xaa, Lys-|-Xaa.. The sequence is that of Trypsin I-P38 from Gallus gallus (Chicken).